Reading from the N-terminus, the 438-residue chain is Dol-P-Man:Man(5)GlcNAc(2)-PP-Dol alpha-1,3-mannosyltransferase (438 aa).

Residue Ser-13 is modified to Phosphoserine. 11 helical membrane passes run 41-61 (YTLL…FWVI), 95-115 (TGPL…YYAT), 123-143 (MAQN…FLIY), 149-169 (VPPF…SIFV), 172-192 (LFND…LLAQ), 203-223 (LAVS…FLLL), 231-251 (ALPK…PFLL), 289-309 (FHLA…LCRW), 332-352 (PLTP…GICF), 356-376 (LHYQ…WAMP), and 407-427 (AALH…PQPF).

It belongs to the glycosyltransferase ALG3 family.

Its subcellular location is the endoplasmic reticulum membrane. It carries out the reaction an alpha-D-Man-(1-&gt;2)-alpha-D-Man-(1-&gt;2)-alpha-D-Man-(1-&gt;3)-[alpha-D-Man-(1-&gt;6)]-beta-D-Man-(1-&gt;4)-beta-D-GlcNAc-(1-&gt;4)-alpha-D-GlcNAc-diphospho-di-trans,poly-cis-dolichol + a di-trans,poly-cis-dolichyl beta-D-mannosyl phosphate = an alpha-D-Man-(1-&gt;2)-alpha-D-Man-(1-&gt;2)-alpha-D-Man-(1-&gt;3)-[alpha-D-Man-(1-&gt;3)-alpha-D-Man-(1-&gt;6)]-beta-D-Man-(1-&gt;4)-beta-D-GlcNAc-(1-&gt;4)-alpha-D-GlcNAc-diphospho-di-trans,poly-cis-dolichol + a di-trans,poly-cis-dolichyl phosphate + H(+). It participates in protein modification; protein glycosylation. Its function is as follows. Dol-P-Man:Man(5)GlcNAc(2)-PP-Dol alpha-1,3-mannosyltransferase that operates in the biosynthetic pathway of dolichol-linked oligosaccharides, the glycan precursors employed in protein asparagine (N)-glycosylation. The assembly of dolichol-linked oligosaccharides begins on the cytosolic side of the endoplasmic reticulum membrane and finishes in its lumen. The sequential addition of sugars to dolichol pyrophosphate produces dolichol-linked oligosaccharides containing fourteen sugars, including two GlcNAcs, nine mannoses and three glucoses. Once assembled, the oligosaccharide is transferred from the lipid to nascent proteins by oligosaccharyltransferases. In the lumen of the endoplasmic reticulum, adds the first dolichyl beta-D-mannosyl phosphate derived mannose in an alpha-1,3 linkage to Man(5)GlcNAc(2)-PP-dolichol to produce Man(6)GlcNAc(2)-PP-dolichol. Man(6)GlcNAc(2)-PP-dolichol is a substrate for ALG9, the following enzyme in the biosynthetic pathway. This Homo sapiens (Human) protein is Dol-P-Man:Man(5)GlcNAc(2)-PP-Dol alpha-1,3-mannosyltransferase.